Consider the following 527-residue polypeptide: Bifunctional purine biosynthesis protein PurH (527 aa).

The MGS-like domain maps to 1-149; that stretch reads MASDFLPVRR…KNFARVAVAA (149 aa).

This sequence belongs to the PurH family.

The enzyme catalyses (6R)-10-formyltetrahydrofolate + 5-amino-1-(5-phospho-beta-D-ribosyl)imidazole-4-carboxamide = 5-formamido-1-(5-phospho-D-ribosyl)imidazole-4-carboxamide + (6S)-5,6,7,8-tetrahydrofolate. The catalysed reaction is IMP + H2O = 5-formamido-1-(5-phospho-D-ribosyl)imidazole-4-carboxamide. The protein operates within purine metabolism; IMP biosynthesis via de novo pathway; 5-formamido-1-(5-phospho-D-ribosyl)imidazole-4-carboxamide from 5-amino-1-(5-phospho-D-ribosyl)imidazole-4-carboxamide (10-formyl THF route): step 1/1. Its pathway is purine metabolism; IMP biosynthesis via de novo pathway; IMP from 5-formamido-1-(5-phospho-D-ribosyl)imidazole-4-carboxamide: step 1/1. The sequence is that of Bifunctional purine biosynthesis protein PurH from Xanthomonas axonopodis pv. citri (strain 306).